A 1095-amino-acid chain; its full sequence is Inactive phospholipase C-like protein 1 (1095 aa).

Positions 1–11 are enriched in basic and acidic residues; that stretch reads MAEGAAGREDP. Positions 1–61 are disordered; it reads MAEGAAGRED…PGAAGTPADS (61 aa). Phosphoserine occurs at positions 47 and 77. Positions 83–222 are interaction with PPP1C; the sequence is SNQKCGGRKK…IWVSGLRYLV (140 aa). Residue T93 is modified to Phosphothreonine; by PKA. S95 bears the Phosphoserine mark. A PH domain is found at 113–223; the sequence is SFMQAGCELK…WVSGLRYLVS (111 aa). Residues 398 to 542 form the PI-PLC X-box domain; that stretch reads QDMTQPLSHY…LKRMIIVKGK (145 aa). The segment at 543–567 is interaction with GABA A beta subunit; the sequence is KLPSDPDVLEGEVTDEDEEAEMSRR. T556 carries the post-translational modification Phosphothreonine. Residue S569 is modified to Phosphoserine. In terms of domain architecture, PI-PLC Y-box spans 585 to 701; sequence LSDLVSICKS…GYVLRPSIMR (117 aa). The C2 domain maps to 701-830; sequence RDEVSYFSAN…PGYRHVPLRS (130 aa). Coiled coils occupy residues 894–914 and 1034–1059; these read LREA…IKEL and LKGQ…QLAC. The interval 1066–1095 is disordered; it reads KAPSSSAEAKSKRSLEAIEEKESSEENGKL. A compositionally biased stretch (basic and acidic residues) spans 1074 to 1095; sequence AKSKRSLEAIEEKESSEENGKL. S1079 bears the Phosphoserine mark.

In terms of assembly, interacts with PPP2CA. Interacts with Ins(1,4,5)P3, Ins(1,4,5,6)P4, GABARAP, GABA receptor beta subunits, GABA receptor gamma-2 subunits and PPP1C. May form a ternary complex with GABA receptor beta subunit and GABARAP. The formation of a ternary complex with GABA receptor beta subunit and GABARAP could be the key step for facilitating the association of GABARAP with the GABA receptor gamma-2 subunit and to allow it to be transported at the right destination. Phosphorylated by the catalytic subunit of PKA. Phosphorylation of Thr-93 resulted in dissociation of PPP1C from PRIP1. As to expression, expressed in a variety of fetal and adult organs including brain, lung and kidney. Its expression was greatly reduced in small and non-small cell lung carcinoma. Isoform 1 is predominantly expressed in brain.

The protein resides in the cytoplasm. Functionally, involved in an inositol phospholipid-based intracellular signaling cascade. Shows no PLC activity to phosphatidylinositol 4,5-bisphosphate and phosphatidylinositol. Component in the phospho-dependent endocytosis process of GABA A receptor. Regulates the turnover of receptors and thus contributes to the maintenance of GABA-mediated synaptic inhibition. Its aberrant expression could contribute to the genesis and progression of lung carcinoma. Acts as an inhibitor of PPP1C. In Homo sapiens (Human), this protein is Inactive phospholipase C-like protein 1 (PLCL1).